The following is a 281-amino-acid chain: 2-dehydro-3-deoxyphosphooctonate aldolase (281 aa).

The protein belongs to the KdsA family.

It localises to the cytoplasm. It catalyses the reaction D-arabinose 5-phosphate + phosphoenolpyruvate + H2O = 3-deoxy-alpha-D-manno-2-octulosonate-8-phosphate + phosphate. The protein operates within carbohydrate biosynthesis; 3-deoxy-D-manno-octulosonate biosynthesis; 3-deoxy-D-manno-octulosonate from D-ribulose 5-phosphate: step 2/3. Its pathway is bacterial outer membrane biogenesis; lipopolysaccharide biosynthesis. The polypeptide is 2-dehydro-3-deoxyphosphooctonate aldolase (Ectopseudomonas mendocina (strain ymp) (Pseudomonas mendocina)).